The primary structure comprises 255 residues: Sorbose reductase sou1 (255 aa).

2 residues coordinate NADP(+): I21 and N95. Catalysis depends on proton donor residues S148 and Y163. Residues Y163, K167, I195, and T197 each coordinate NADP(+). Catalysis depends on K167, which acts as the Lowers pKa of active site Tyr.

The protein belongs to the short-chain dehydrogenases/reductases (SDR) family.

It catalyses the reaction D-sorbitol + NADP(+) = keto-L-sorbose + NADPH + H(+). Functionally, catalyzes the NADP dependent reduction of L-sorbose to D-glucitol. The sequence is that of Sorbose reductase sou1 (sou1) from Schizosaccharomyces pombe (strain 972 / ATCC 24843) (Fission yeast).